Reading from the N-terminus, the 327-residue chain is MSSNDSNDTDKQHTRLDPTGVDDAYIPPEQPETKHHRFKISKDTLRNHFIAAAGEFCGTFMFLWCAYVICNVANHDVALVAAPDGSHPGQLIMIAIGFGFSVMFSIWCFAGVSGGALNPAVSLSLCLARAVSPTRCVVMWVSQIVAGMAAGGAASAMTPGEVLFANSLGLGCSRTRGLFLEMFGTAILCLTVLMTAVEKRETNFMAALPIGISLFIAHVALTAYTGTGVNPARSLGAAVAARYFPHYHWIYWIGPLLGSILAWSVWQLLQILDYTTYVTAEKAASTKEKAQKKVKPAVPLLWLKSNFSLLFFISRSLALNVIIFGKN.

The tract at residues 1-34 (MSSNDSNDTDKQHTRLDPTGVDDAYIPPEQPETK) is disordered. Over 1-48 (MSSNDSNDTDKQHTRLDPTGVDDAYIPPEQPETKHHRFKISKDTLRNH) the chain is Cytoplasmic. Residues 49-69 (FIAAAGEFCGTFMFLWCAYVI) form a helical membrane-spanning segment. The Extracellular segment spans residues 70 to 91 (CNVANHDVALVAAPDGSHPGQL). Residues 92–112 (IMIAIGFGFSVMFSIWCFAGV) form a helical membrane-spanning segment. Residues 113–136 (SGGALNPAVSLSLCLARAVSPTRC) lie on the Cytoplasmic side of the membrane. Residues 118–120 (NPA) carry the NPA 1 motif. The helical transmembrane segment at 137 to 157 (VVMWVSQIVAGMAAGGAASAM) threads the bilayer. Residues 158–176 (TPGEVLFANSLGLGCSRTR) are Extracellular-facing. Residues 177–197 (GLFLEMFGTAILCLTVLMTAV) form a helical membrane-spanning segment. Over 198–203 (EKRETN) the chain is Cytoplasmic. A helical membrane pass occupies residues 204–224 (FMAALPIGISLFIAHVALTAY). At 225 to 248 (TGTGVNPARSLGAAVAARYFPHYH) the chain is on the extracellular side. The NPA 2 motif lies at 230-232 (NPA). Residues 249 to 269 (WIYWIGPLLGSILAWSVWQLL) traverse the membrane as a helical segment. Residues 270–327 (QILDYTTYVTAEKAASTKEKAQKKVKPAVPLLWLKSNFSLLFFISRSLALNVIIFGKN) lie on the Cytoplasmic side of the membrane.

This sequence belongs to the MIP/aquaporin (TC 1.A.8) family.

The protein resides in the endoplasmic reticulum membrane. The protein localises to the cell membrane. Its function is as follows. Water channel required to facilitate the transport of water across membranes. Involved in sporulation, freeze tolerance and osmotolerance. Is non-functional in most laboratory strains. This chain is Aquaporin-1 (AQY1), found in Saccharomyces cerevisiae (strain Lalvin EC1118 / Prise de mousse) (Baker's yeast).